The primary structure comprises 436 residues: Bifunctional protein GlmU (436 aa).

The pyrophosphorylase stretch occupies residues 1-225 (MNNNTSIIIL…EQNFMGINDK (225 aa)). Residues 10–13 (LAAG), Lys-24, Gln-76, and 83–84 (GT) contribute to the UDP-N-acetyl-alpha-D-glucosamine site. Asp-104 serves as a coordination point for Mg(2+). UDP-N-acetyl-alpha-D-glucosamine contacts are provided by Gly-137, Glu-151, Asn-166, and Asn-223. Asn-223 provides a ligand contact to Mg(2+). A linker region spans residues 226–246 (FQLSIAEKIMQDEIKQNLMKA). The N-acetyltransferase stretch occupies residues 247–436 (GVLMRMPESI…KFFGKDDVKK (190 aa)). Residues Arg-310 and Lys-327 each coordinate UDP-N-acetyl-alpha-D-glucosamine. Residue His-338 is the Proton acceptor of the active site. Positions 341 and 352 each coordinate UDP-N-acetyl-alpha-D-glucosamine. Residues 361 to 362 (NY), Ser-380, Ala-398, and Arg-415 each bind acetyl-CoA.

It in the N-terminal section; belongs to the N-acetylglucosamine-1-phosphate uridyltransferase family. This sequence in the C-terminal section; belongs to the transferase hexapeptide repeat family. As to quaternary structure, homotrimer. Mg(2+) is required as a cofactor.

The protein resides in the cytoplasm. It catalyses the reaction alpha-D-glucosamine 1-phosphate + acetyl-CoA = N-acetyl-alpha-D-glucosamine 1-phosphate + CoA + H(+). The enzyme catalyses N-acetyl-alpha-D-glucosamine 1-phosphate + UTP + H(+) = UDP-N-acetyl-alpha-D-glucosamine + diphosphate. It participates in nucleotide-sugar biosynthesis; UDP-N-acetyl-alpha-D-glucosamine biosynthesis; N-acetyl-alpha-D-glucosamine 1-phosphate from alpha-D-glucosamine 6-phosphate (route II): step 2/2. It functions in the pathway nucleotide-sugar biosynthesis; UDP-N-acetyl-alpha-D-glucosamine biosynthesis; UDP-N-acetyl-alpha-D-glucosamine from N-acetyl-alpha-D-glucosamine 1-phosphate: step 1/1. The protein operates within bacterial outer membrane biogenesis; LPS lipid A biosynthesis. Catalyzes the last two sequential reactions in the de novo biosynthetic pathway for UDP-N-acetylglucosamine (UDP-GlcNAc). The C-terminal domain catalyzes the transfer of acetyl group from acetyl coenzyme A to glucosamine-1-phosphate (GlcN-1-P) to produce N-acetylglucosamine-1-phosphate (GlcNAc-1-P), which is converted into UDP-GlcNAc by the transfer of uridine 5-monophosphate (from uridine 5-triphosphate), a reaction catalyzed by the N-terminal domain. The sequence is that of Bifunctional protein GlmU from Campylobacter concisus (strain 13826).